The following is a 331-amino-acid chain: MPEVLLVATPGTRIYVRRGVVYAEAPSGEKAVVTADTELVVLATGSVSVSGRALRRLAELGVRLVVLGQRGQVVAEHRPVDRVNRTIEARMEQYRVKATGEALYYAAEMVYAKIVNQAKLLRYLAKSRREPWLRDAGYRVEGHADRLRQIIENEEPTTPEVIRSIEAQAARDYWDAIAQIAPTPFPGRQPRGEDHLNMALSYGYAILYSIAHDALTVAGLDPYAGFLHADRSGRPSLTYDYADTYKPIAVDKPLLTAPRKTDCLDTYMGALTYNARRCIATLVLENIYKTPYPDSRGRKKTLRDHIYTYAWNLAAAIRQHKPYKPFIVGRL.

Mn(2+) is bound by residues glutamate 166, histidine 228, and aspartate 243.

Belongs to the CRISPR-associated endonuclease Cas1 family. As to quaternary structure, homodimer, forms a heterotetramer with a Cas2 homodimer. Requires Mg(2+) as cofactor. The cofactor is Mn(2+).

In terms of biological role, CRISPR (clustered regularly interspaced short palindromic repeat), is an adaptive immune system that provides protection against mobile genetic elements (viruses, transposable elements and conjugative plasmids). CRISPR clusters contain spacers, sequences complementary to antecedent mobile elements, and target invading nucleic acids. CRISPR clusters are transcribed and processed into CRISPR RNA (crRNA). Acts as a dsDNA endonuclease. Involved in the integration of spacer DNA into the CRISPR cassette. In Hyperthermus butylicus (strain DSM 5456 / JCM 9403 / PLM1-5), this protein is CRISPR-associated endonuclease Cas1.